Consider the following 285-residue polypeptide: D-apionate oxidoisomerase (285 aa).

NAD(+) contacts are provided by residues 15 to 17, E36, and D71; that span reads GKM. H116 and E186 together coordinate Zn(2+).

The protein belongs to the ApnO family. It depends on Zn(2+) as a cofactor.

It catalyses the reaction D-apionate + NAD(+) = 3-oxoisoapionate + NADH + H(+). It functions in the pathway carbohydrate metabolism. In terms of biological role, involved in catabolism of D-apiose. Catalyzes the conversion of D-apionate to 3-oxo-isoapionate. This is D-apionate oxidoisomerase from Pectobacterium atrosepticum (strain SCRI 1043 / ATCC BAA-672) (Erwinia carotovora subsp. atroseptica).